The chain runs to 332 residues: Methylthioribose-1-phosphate isomerase (332 aa).

Substrate contacts are provided by residues 44–46, Arg-87, and Gln-192; that span reads RGA. Asp-233 (proton donor) is an active-site residue. Residue 243–244 coordinates substrate; that stretch reads NK.

It belongs to the eIF-2B alpha/beta/delta subunits family. MtnA subfamily.

The catalysed reaction is 5-(methylsulfanyl)-alpha-D-ribose 1-phosphate = 5-(methylsulfanyl)-D-ribulose 1-phosphate. The protein operates within amino-acid biosynthesis; L-methionine biosynthesis via salvage pathway; L-methionine from S-methyl-5-thio-alpha-D-ribose 1-phosphate: step 1/6. Its function is as follows. Catalyzes the interconversion of methylthioribose-1-phosphate (MTR-1-P) into methylthioribulose-1-phosphate (MTRu-1-P). The chain is Methylthioribose-1-phosphate isomerase from Dehalococcoides mccartyi (strain ATCC BAA-2100 / JCM 16839 / KCTC 5957 / BAV1).